The primary structure comprises 1380 residues: DNA-directed RNA polymerase subunit beta (1380 aa).

The protein belongs to the RNA polymerase beta chain family. In terms of assembly, the RNAP catalytic core consists of 2 alpha, 1 beta, 1 beta' and 1 omega subunit. When a sigma factor is associated with the core the holoenzyme is formed, which can initiate transcription.

The enzyme catalyses RNA(n) + a ribonucleoside 5'-triphosphate = RNA(n+1) + diphosphate. In terms of biological role, DNA-dependent RNA polymerase catalyzes the transcription of DNA into RNA using the four ribonucleoside triphosphates as substrates. This is DNA-directed RNA polymerase subunit beta from Alcanivorax borkumensis (strain ATCC 700651 / DSM 11573 / NCIMB 13689 / SK2).